The sequence spans 247 residues: UDP-N-acetyl-D-mannosaminuronic acid transferase (247 aa).

It belongs to the glycosyltransferase 26 family.

The catalysed reaction is UDP-N-acetyl-alpha-D-mannosaminouronate + N-acetyl-alpha-D-glucosaminyl-di-trans,octa-cis-undecaprenyl diphosphate = beta-D-ManNAcA-(1-&gt;4)-alpha-D-GlcNAc-di-trans,octa-cis-undecaprenyl diphosphate + UDP + H(+). The protein operates within bacterial outer membrane biogenesis; enterobacterial common antigen biosynthesis. Functionally, catalyzes the synthesis of Und-PP-GlcNAc-ManNAcA (Lipid II), the second lipid-linked intermediate involved in enterobacterial common antigen (ECA) synthesis. This Enterobacter sp. (strain 638) protein is UDP-N-acetyl-D-mannosaminuronic acid transferase.